A 239-amino-acid chain; its full sequence is Ribosomal RNA small subunit methyltransferase G (239 aa).

S-adenosyl-L-methionine contacts are provided by residues G77, F82, 128-129 (AE), and R147.

The protein belongs to the methyltransferase superfamily. RNA methyltransferase RsmG family.

The protein resides in the cytoplasm. In terms of biological role, specifically methylates the N7 position of guanine in position 535 of 16S rRNA. The sequence is that of Ribosomal RNA small subunit methyltransferase G from Bacillus mycoides (strain KBAB4) (Bacillus weihenstephanensis).